Reading from the N-terminus, the 379-residue chain is Spermatogenesis-associated protein 17 (379 aa).

3 IQ domains span residues 48 to 77, 71 to 100, and 107 to 136; these read ENDA…VVTI, LNRV…AAYY, and YNEM…LKEY.

Strongly expressed in adult testis but weakly expressed in the spleen and thymus. Strongly expressed in round and elongating spermatids, and weakly or not expressed in spermatozoa.

It localises to the cytoplasm. The chain is Spermatogenesis-associated protein 17 (Spata17) from Mus musculus (Mouse).